The primary structure comprises 303 residues: Uridylate-specific endoribonuclease C (303 aa).

The signal sequence occupies residues Met-1–Gly-16. An EndoU domain is found at Thr-32–Ile-303. Active-site residues include His-181, His-196, and Lys-239. Asn-287 is a glycosylation site (N-linked (GlcNAc...) asparagine).

This sequence belongs to the ENDOU family. As to quaternary structure, monomer. The cofactor is Mn(2+).

The protein localises to the secreted. It carries out the reaction ribonucleotidyl-uridine-RNA = a 5'-end dephospho-uridine-RNA + a 3'-end 2',3'-cyclophospho-ribonucleotide-RNA. Its function is as follows. Endoribonuclease that cleaves single-stranded RNAs at 5' of uridylates and releases a product with a 2',3'-cyclic phosphate at the 3'-end. The sequence is that of Uridylate-specific endoribonuclease C (endou-c) from Xenopus laevis (African clawed frog).